Here is a 209-residue protein sequence, read N- to C-terminus: Holliday junction branch migration complex subunit RuvA (209 aa).

The segment at 1-70 (MINYLKGKTT…EDQQILYGFS (70 aa)) is domain I. Positions 71–149 (TDSERDLFRQ…QWEQAIALKT (79 aa)) are domain II. The segment at 150–160 (PVSVGVPSREI) is flexible linker. Positions 160–209 (ILEEVEMTLLALGYTDEEIDQAISAISQDNLLLKNPHVEEWLKSAIAWLS) are domain III.

The protein belongs to the RuvA family. Homotetramer. Forms an RuvA(8)-RuvB(12)-Holliday junction (HJ) complex. HJ DNA is sandwiched between 2 RuvA tetramers; dsDNA enters through RuvA and exits via RuvB. An RuvB hexamer assembles on each DNA strand where it exits the tetramer. Each RuvB hexamer is contacted by two RuvA subunits (via domain III) on 2 adjacent RuvB subunits; this complex drives branch migration. In the full resolvosome a probable DNA-RuvA(4)-RuvB(12)-RuvC(2) complex forms which resolves the HJ.

It is found in the cytoplasm. In terms of biological role, the RuvA-RuvB-RuvC complex processes Holliday junction (HJ) DNA during genetic recombination and DNA repair, while the RuvA-RuvB complex plays an important role in the rescue of blocked DNA replication forks via replication fork reversal (RFR). RuvA specifically binds to HJ cruciform DNA, conferring on it an open structure. The RuvB hexamer acts as an ATP-dependent pump, pulling dsDNA into and through the RuvAB complex. HJ branch migration allows RuvC to scan DNA until it finds its consensus sequence, where it cleaves and resolves the cruciform DNA. The polypeptide is Holliday junction branch migration complex subunit RuvA (Gloeothece citriformis (strain PCC 7424) (Cyanothece sp. (strain PCC 7424))).